Consider the following 231-residue polypeptide: Small ribosomal subunit protein uS3 (231 aa).

The KH type-2 domain maps to 39 to 107 (IRELLHKELK…DVVLNIVEIR (69 aa)).

The protein belongs to the universal ribosomal protein uS3 family. As to quaternary structure, part of the 30S ribosomal subunit. Forms a tight complex with proteins S10 and S14.

Its function is as follows. Binds the lower part of the 30S subunit head. Binds mRNA in the 70S ribosome, positioning it for translation. This Nitrobacter winogradskyi (strain ATCC 25391 / DSM 10237 / CIP 104748 / NCIMB 11846 / Nb-255) protein is Small ribosomal subunit protein uS3.